A 490-amino-acid polypeptide reads, in one-letter code: Aspartyl/glutamyl-tRNA(Asn/Gln) amidotransferase subunit B (490 aa).

This sequence belongs to the GatB/GatE family. GatB subfamily. In terms of assembly, heterotrimer of A, B and C subunits.

It carries out the reaction L-glutamyl-tRNA(Gln) + L-glutamine + ATP + H2O = L-glutaminyl-tRNA(Gln) + L-glutamate + ADP + phosphate + H(+). The catalysed reaction is L-aspartyl-tRNA(Asn) + L-glutamine + ATP + H2O = L-asparaginyl-tRNA(Asn) + L-glutamate + ADP + phosphate + 2 H(+). Allows the formation of correctly charged Asn-tRNA(Asn) or Gln-tRNA(Gln) through the transamidation of misacylated Asp-tRNA(Asn) or Glu-tRNA(Gln) in organisms which lack either or both of asparaginyl-tRNA or glutaminyl-tRNA synthetases. The reaction takes place in the presence of glutamine and ATP through an activated phospho-Asp-tRNA(Asn) or phospho-Glu-tRNA(Gln). This chain is Aspartyl/glutamyl-tRNA(Asn/Gln) amidotransferase subunit B, found in Synechococcus sp. (strain JA-2-3B'a(2-13)) (Cyanobacteria bacterium Yellowstone B-Prime).